The sequence spans 256 residues: MNFTVIIPARYASSRLPGKPLADIAGKPMIQHVWEKAQQSGATRVVVATDYEEVARAVRGFDGEVCMTSSQHNSGTERLAEVIEKLAIPDDEIIVNIQGDEPLVPPVIVSQVAQNLQKYQVNMATLAVKIEDVEELFNPNVVKVLTDKDGYVLYFSRAVIPWDRDQFVQLGKADLSQLQLHQHYFRHIGIYAYRAGFIKQYVQWQPTTLEQIERLEQLRVLWNGERIHVELAKQAPAVGVDTVEDLEKVRSILSHV.

This sequence belongs to the KdsB family.

The protein localises to the cytoplasm. The enzyme catalyses 3-deoxy-alpha-D-manno-oct-2-ulosonate + CTP = CMP-3-deoxy-beta-D-manno-octulosonate + diphosphate. Its pathway is nucleotide-sugar biosynthesis; CMP-3-deoxy-D-manno-octulosonate biosynthesis; CMP-3-deoxy-D-manno-octulosonate from 3-deoxy-D-manno-octulosonate and CTP: step 1/1. The protein operates within bacterial outer membrane biogenesis; lipopolysaccharide biosynthesis. Its function is as follows. Activates KDO (a required 8-carbon sugar) for incorporation into bacterial lipopolysaccharide in Gram-negative bacteria. The chain is 3-deoxy-manno-octulosonate cytidylyltransferase from Histophilus somni (strain 129Pt) (Haemophilus somnus).